We begin with the raw amino-acid sequence, 65 residues long: Large ribosomal subunit protein bL35 (65 aa).

Belongs to the bacterial ribosomal protein bL35 family.

The protein is Large ribosomal subunit protein bL35 of Wolbachia sp. subsp. Brugia malayi (strain TRS).